Here is a 955-residue protein sequence, read N- to C-terminus: Leucine--tRNA ligase (955 aa).

A 'HIGH' region motif is present at residues 66–77; that stretch reads PYPSGSGLHVGH. The short motif at 725-729 is the 'KMSKS' region element; it reads KMGKS. Lys728 contacts ATP.

Belongs to the class-I aminoacyl-tRNA synthetase family.

Its subcellular location is the cytoplasm. It catalyses the reaction tRNA(Leu) + L-leucine + ATP = L-leucyl-tRNA(Leu) + AMP + diphosphate. This is Leucine--tRNA ligase from Saccharopolyspora erythraea (strain ATCC 11635 / DSM 40517 / JCM 4748 / NBRC 13426 / NCIMB 8594 / NRRL 2338).